The sequence spans 1059 residues: Putative ATP-dependent RNA helicase BoYb (1059 aa).

A Q motif motif is present at residues 54–82 (RRFAEVSLLPDILETMRNLGLNRLLRLQS). The Helicase ATP-binding domain occupies 87–284 (HLAGGSGHGA…RAVNDKPALV (198 aa)). 100-107 (GSPASGRT) is an ATP binding site. The short motif at 230 to 233 (DDVD) is the DEAD box element. Positions 575–639 (PPVAGAICMY…GKLFECPEAL (65 aa)) constitute a Tudor domain. A disordered region spans residues 756–787 (VQDSKEKANSKPHEKMKGKMTDQPAKLQSQPP). Over residues 757-775 (QDSKEKANSKPHEKMKGKM) the composition is skewed to basic and acidic residues.

The protein resides in the cytoplasm. The enzyme catalyses ATP + H2O = ADP + phosphate + H(+). In terms of biological role, involved in primary piRNA biogenesis in germline cells. This chain is Putative ATP-dependent RNA helicase BoYb (BoYb), found in Drosophila melanogaster (Fruit fly).